The chain runs to 146 residues: Large ribosomal subunit protein uL23m (146 aa).

The disordered stretch occupies residues 108 to 138; it reads PDLFPEKDPRSPEPLEEELPQQRQSSDLRCP. The segment covering 111–120 has biased composition (basic and acidic residues); the sequence is FPEKDPRSPE.

This sequence belongs to the universal ribosomal protein uL23 family. In terms of assembly, component of the mitochondrial ribosome large subunit (39S) which comprises a 16S rRNA and about 50 distinct proteins.

It localises to the mitochondrion. In Mus musculus (Mouse), this protein is Large ribosomal subunit protein uL23m (Mrpl23).